Consider the following 260-residue polypeptide: Taurine import ATP-binding protein TauB (260 aa).

The ABC transporter domain occupies 6–235 (AQQVSVVYAS…RYAHGEPMRS (230 aa)). Residue 40–47 (GASGCGKS) coordinates ATP.

It belongs to the ABC transporter superfamily. Taurine importer (TC 3.A.1.17.1) family. The complex is composed of two ATP-binding proteins (TauB), two transmembrane proteins (TauC) and a solute-binding protein (TauA).

Its subcellular location is the cell inner membrane. It catalyses the reaction taurine(out) + ATP + H2O = taurine(in) + ADP + phosphate + H(+). Part of the ABC transporter complex TauABC involved in taurine import. Responsible for energy coupling to the transport system. This chain is Taurine import ATP-binding protein TauB, found in Burkholderia pseudomallei (strain 1710b).